The chain runs to 345 residues: KH domain-containing, RNA-binding, signal transduction-associated protein 2 (345 aa).

A KH domain is found at 65-131 (LIPVKQYPKF…AKHAHLSDEL (67 aa)). Disordered stretches follow at residues 178–224 (LNGS…TRGA) and 321–345 (SRST…YGRY). Positions 336–345 (GYREHPYGRY) are enriched in basic and acidic residues.

It belongs to the KHDRBS family.

It is found in the nucleus. RNA-binding protein that plays a role in the regulation of alternative splicing. This chain is KH domain-containing, RNA-binding, signal transduction-associated protein 2 (khdrbs2), found in Xenopus tropicalis (Western clawed frog).